The sequence spans 308 residues: Pseudouridine-5'-phosphate glycosidase (308 aa).

E29 functions as the Proton donor in the catalytic mechanism. Residues K90 and V110 each contribute to the substrate site. D142 is a binding site for Mn(2+). 144–146 (SSD) lines the substrate pocket. The Nucleophile role is filled by K163.

The protein belongs to the pseudouridine-5'-phosphate glycosidase family. In terms of assembly, homotrimer. Mn(2+) serves as cofactor.

The catalysed reaction is D-ribose 5-phosphate + uracil = psi-UMP + H2O. Functionally, catalyzes the reversible cleavage of pseudouridine 5'-phosphate (PsiMP) to ribose 5-phosphate and uracil. Functions biologically in the cleavage direction, as part of a pseudouridine degradation pathway. The sequence is that of Pseudouridine-5'-phosphate glycosidase from Serratia proteamaculans (strain 568).